The primary structure comprises 339 residues: Neutrophil cytosol factor 4 (339 aa).

One can recognise a PX domain in the interval 19–140 (DVAVSANIAD…IFFYQSAYDA (122 aa)). Residues 58–60 (RYR) and 92–94 (KVY) contribute to the a 1,2-diacyl-sn-glycero-3-phospho-(1D-myo-inositol-3-phosphate) site. At Thr154 the chain carries Phosphothreonine. Positions 170–229 (MEAPRAEALFDFTGNSKLELSFKAGDVIFLLSKINKDWLEGTSQGATGIFPGSFVKILKD) constitute an SH3 domain. In terms of domain architecture, PB1 spans 237-329 (TNWLRCYFYE…FPWKLHVTQK (93 aa)). Phosphoserine is present on Ser315.

Component of the phagocyte NADPH oxidase complex composed of an obligatory core heterodimer formed by the membrane proteins CYBA and CYBB and the cytosolic regulatory subunits NCF1/p47-phox, NCF2/p67-phox, NCF4/p40-phox and the small GTPase RAC1 or RAC2. Part of a cytosolic complex composed at least by NCF1, NCF2 and NCF4. Interacts with NCF2. Interacts with NCF1. The NCF2-NCF4 complex interacts with GBP7 (via GB1/RHD3-type G domain).

The protein resides in the cytoplasm. The protein localises to the cytosol. It is found in the endosome membrane. It localises to the membrane. Subunit of the phagocyte NADPH oxidase complex that mediates the transfer of electrons from cytosolic NADPH to O2 to produce the superoxide anion (O2(-)). In the activated complex, electrons are first transferred from NADPH to flavin adenine dinucleotide (FAD) and subsequently transferred via two heme molecules to molecular oxygen, producing superoxide through an outer-sphere reaction. Activation of the NADPH oxidase complex is initiated by the assembly of cytosolic subunits of the NADPH oxidase complex with the core NADPH oxidase complex to form a complex at the plasma membrane or phagosomal membrane. This activation process is initiated by phosphorylation dependent binding of the cytosolic NCF1/p47-phox subunit to the C-terminus of CYBA/p22-phox. In Mus musculus (Mouse), this protein is Neutrophil cytosol factor 4.